The chain runs to 267 residues: Alkaline ceramidase 3 (267 aa).

Topologically, residues 1 to 33 (MAPAADREGYWGPTTSTLDWCEENYSVTWYIAE) are cytoplasmic. 5 residues coordinate Ca(2+): D19, W20, E22, N24, and E33. Residues 34-55 (FWNTVSNLIMIIPPMFGAVQSV) traverse the membrane as a helical segment. Over 56–61 (RDGLEK) the chain is Lumenal. A helical membrane pass occupies residues 62–82 (RYIASYLALTVVGMGSWCFHM). H81 contributes to the Zn(2+) binding site. Over 83–87 (TLKYE) the chain is Cytoplasmic. The chain crosses the membrane as a helical span at residues 88 to 108 (MQLLDELPMIYSCCIFVYCMF). Residues 109–118 (ECFKIKNSVN) are Lumenal-facing. Residues 119-139 (YHLLFTLVLFSLIVTTVYLKV) form a helical membrane-spanning segment. Over 140 to 141 (KE) the chain is Cytoplasmic. The chain crosses the membrane as a helical span at residues 142–162 (PIFHQVMYGMLVFTLVLRSIY). The Lumenal portion of the chain corresponds to 163–173 (IVTWVYPWLRG). Residues 174-194 (LGYTSLGIFLLGFLFWNIDNI) traverse the membrane as a helical segment. The Cytoplasmic portion of the chain corresponds to 195–215 (FCESLRNFRKKVPPIIGITTQ). Residues 216 to 236 (FHAWWHILTGLGSYLHILFSL) traverse the membrane as a helical segment. Residues H217 and H221 each contribute to the Zn(2+) site. The Lumenal segment spans residues 237–267 (YTRTLYLRYRPKVKFLFGIWPVILFEPLRKH).

It belongs to the alkaline ceramidase family. Requires Zn(2+) as cofactor. As to expression, ubiquitously expressed. Highly expressed in placenta. Expressed in erythrocytes.

Its subcellular location is the endoplasmic reticulum membrane. The protein resides in the golgi apparatus membrane. It catalyses the reaction an N-acyl-(4R)-4-hydroxysphinganine + H2O = (4R)-hydroxysphinganine + a fatty acid. The catalysed reaction is N-(5Z,8Z,11Z,14Z-eicosatetraenoyl)-sphing-4-enine + H2O = sphing-4-enine + (5Z,8Z,11Z,14Z)-eicosatetraenoate. The enzyme catalyses N-(5Z,8Z,11Z,14Z-eicosatetraenoyl)-sphinganine + H2O = sphinganine + (5Z,8Z,11Z,14Z)-eicosatetraenoate. It carries out the reaction N-(5Z,8Z,11Z,14Z-eicosatetraenoyl)-(4R)-hydroxysphinganine + H2O = (4R)-hydroxysphinganine + (5Z,8Z,11Z,14Z)-eicosatetraenoate. It catalyses the reaction N-(11Z-eicosenoyl)-sphing-4-enine + H2O = (11Z)-eicosenoate + sphing-4-enine. The catalysed reaction is N-(11Z-eicosenoyl)-sphinganine + H2O = (11Z)-eicosenoate + sphinganine. The enzyme catalyses N-(11Z-eicosenoyl)-(4R)-hydroxysphinganine + H2O = (11Z)-eicosenoate + (4R)-hydroxysphinganine. It carries out the reaction N-(9Z-octadecenoyl)-sphing-4-enine + H2O = sphing-4-enine + (9Z)-octadecenoate. It catalyses the reaction N-(9Z-octadecenoyl)-sphinganine + H2O = sphinganine + (9Z)-octadecenoate. The catalysed reaction is N-(9Z-octadecenoyl)-(4R)-hydroxysphinganine + H2O = (4R)-hydroxysphinganine + (9Z)-octadecenoate. The enzyme catalyses an N-acylsphing-4-enine + H2O = sphing-4-enine + a fatty acid. It carries out the reaction an N-acylsphinganine + H2O = sphinganine + a fatty acid. It functions in the pathway lipid metabolism; sphingolipid metabolism. With respect to regulation, activated by 5 mM Ca(2+) and inhibited by 5 mM Zn(2+). Endoplasmic reticulum and Golgi ceramidase that catalyzes the hydrolysis of unsaturated long-chain C18:1-, C20:1- and C20:4-ceramides, dihydroceramides and phytoceramides into sphingoid bases like sphingosine and free fatty acids at alkaline pH. Ceramides, sphingosine, and its phosphorylated form sphingosine-1-phosphate are bioactive lipids that mediate cellular signaling pathways regulating several biological processes including cell proliferation, apoptosis and differentiation. Controls the generation of sphingosine in erythrocytes, and thereby sphingosine-1-phosphate in plasma. Through the regulation of ceramides and sphingosine-1-phosphate homeostasis in the brain may play a role in neurons survival and function. By regulating the levels of pro-inflammatory ceramides in immune cells and tissues, may modulate the inflammatory response. The chain is Alkaline ceramidase 3 (ACER3) from Homo sapiens (Human).